Consider the following 413-residue polypeptide: Probable alpha-tubulin polyglutamylase Ttll1 (413 aa).

Residues 2-370 (ASKKLKYKTD…DDWNDDSSKT (369 aa)) enclose the TTL domain. ATP contacts are provided by residues 184-187 (SRYI), Lys-197, and Asp-199.

This sequence belongs to the tubulin polyglutamylase family.

It is found in the cytoplasm. Its subcellular location is the cytoskeleton. It localises to the cilium basal body. The protein resides in the contractile vacuole. In terms of biological role, probable tubulin polyglutamylase with a strong preference for alpha-tubulin. Modifies alpha-tubulin, generating side chains of glutamate on the gamma-carboxyl groups of specific glutamate residues within the C-terminal tail of alpha-tubulin. The protein is Probable alpha-tubulin polyglutamylase Ttll1 (Ttll1) of Tetrahymena thermophila (strain SB210).